The primary structure comprises 229 residues: MKKKAVILYSGGLDSTTCMAIAREEGFEPYAMSFDYGQRHSVELATAKANAKTMGASEHLVVSFDLRKVGGSALTADLDVPKEGIGAGIPVTYVPARNTIFLSFALGWAEVLGAFDIFIGVNALDYSGYPDCRPEYIAAFEATANLATRAGVEGTGRFVIHAPLIAMTKAEIIRKGLALGVDYGRTHSCYDPTPEGLACGLCDSCRLRLKGFAEAGVTDPVPYAVRSKK.

9–19 (YSGGLDSTTCM) provides a ligand contact to ATP. Zn(2+) is bound by residues Cys-189, Cys-199, Cys-202, and Cys-205.

It belongs to the QueC family. The cofactor is Zn(2+).

The enzyme catalyses 7-carboxy-7-deazaguanine + NH4(+) + ATP = 7-cyano-7-deazaguanine + ADP + phosphate + H2O + H(+). Its pathway is purine metabolism; 7-cyano-7-deazaguanine biosynthesis. Catalyzes the ATP-dependent conversion of 7-carboxy-7-deazaguanine (CDG) to 7-cyano-7-deazaguanine (preQ(0)). This chain is 7-cyano-7-deazaguanine synthase, found in Geotalea daltonii (strain DSM 22248 / JCM 15807 / FRC-32) (Geobacter daltonii).